A 260-amino-acid polypeptide reads, in one-letter code: Adenosylcobinamide-GDP ribazoletransferase (260 aa).

6 consecutive transmembrane segments (helical) span residues 40–60 (AFPL…FMAY), 64–84 (LPPL…TGAL), 117–137 (FAAL…MTII), 192–212 (GIGL…LSLI), 214–234 (ALVL…AKIG), and 240–260 (TLGA…VMAL).

This sequence belongs to the CobS family. Requires Mg(2+) as cofactor.

It localises to the cell inner membrane. It catalyses the reaction alpha-ribazole + adenosylcob(III)inamide-GDP = adenosylcob(III)alamin + GMP + H(+). The catalysed reaction is alpha-ribazole 5'-phosphate + adenosylcob(III)inamide-GDP = adenosylcob(III)alamin 5'-phosphate + GMP + H(+). It participates in cofactor biosynthesis; adenosylcobalamin biosynthesis; adenosylcobalamin from cob(II)yrinate a,c-diamide: step 7/7. Functionally, joins adenosylcobinamide-GDP and alpha-ribazole to generate adenosylcobalamin (Ado-cobalamin). Also synthesizes adenosylcobalamin 5'-phosphate from adenosylcobinamide-GDP and alpha-ribazole 5'-phosphate. This chain is Adenosylcobinamide-GDP ribazoletransferase, found in Brucella anthropi (strain ATCC 49188 / DSM 6882 / CCUG 24695 / JCM 21032 / LMG 3331 / NBRC 15819 / NCTC 12168 / Alc 37) (Ochrobactrum anthropi).